We begin with the raw amino-acid sequence, 297 residues long: ABSCISIC ACID-INSENSITIVE 5-like protein 2 (297 aa).

Ser-21, Ser-43, and Ser-81 each carry phosphoserine. Disordered stretches follow at residues 100–119 (IQQNKNGGSAHERRDKQPTL) and 138–157 (IPGSNHDGPVGGGSAGSGAG). At Thr-118 the chain carries Phosphothreonine. Positions 146 to 157 (PVGGGSAGSGAG) are enriched in gly residues. One can recognise a bZIP domain in the interval 225–288 (VERRQKRMIK…SVPPPDPKRQ (64 aa)). Positions 227–246 (RRQKRMIKNRESAARSRARK) are basic motif. Positions 253–267 (LEIKVSRLEEENERL) are leucine-zipper. A disordered region spans residues 272–297 (EVEKILPSVPPPDPKRQLRRTSSAPF).

It belongs to the bZIP family. ABI5 subfamily. DNA-binding heterodimer with ABI5/DPBF1, DPBF2 or EEL/DPBF4. Interacts with the AFP proteins AFP1, AFP2, AFP3 and AFP4. As to expression, predominantly expressed in seeds.

It is found in the nucleus. In terms of biological role, binds to the embryo specification element and the ABA-responsive element (ABRE) of the Dc3 gene promoter. Could participate in abscisic acid-regulated gene expression during seed development. The chain is ABSCISIC ACID-INSENSITIVE 5-like protein 2 (DPBF3) from Arabidopsis thaliana (Mouse-ear cress).